The chain runs to 391 residues: 4-coumarate--CoA ligase (391 aa).

Belongs to the ATP-dependent AMP-binding enzyme family.

It catalyses the reaction (E)-4-coumarate + ATP + CoA = (E)-4-coumaroyl-CoA + AMP + diphosphate. Converts p-coumaric acid into p-coumaryl CoA. This is necessary for the activation of the photoactive yellow protein (PYP) chromophore. This is 4-coumarate--CoA ligase (pcl) from Halorhodospira halophila (Ectothiorhodospira halophila).